A 227-amino-acid chain; its full sequence is Cytochrome c oxidase subunit 2 (227 aa).

The Mitochondrial intermembrane segment spans residues 1-14 (MAYPFQLGLQDATS). The chain crosses the membrane as a helical span at residues 15-45 (PIMEELLHFHDHTLMIVFLISSLVLYIISSM). Residues 46–59 (LTTKLTHTSTMDAQ) lie on the Mitochondrial matrix side of the membrane. The helical transmembrane segment at 60 to 87 (EVETVWTILPAIILVLIALPSLRILYMM) threads the bilayer. The Mitochondrial intermembrane portion of the chain corresponds to 88 to 227 (DETNNPSLTV…YFETWSALMV (140 aa)). Cu cation contacts are provided by histidine 161, cysteine 196, glutamate 198, cysteine 200, histidine 204, and methionine 207. Residue glutamate 198 coordinates Mg(2+). Position 218 is a phosphotyrosine (tyrosine 218).

It belongs to the cytochrome c oxidase subunit 2 family. Component of the cytochrome c oxidase (complex IV, CIV), a multisubunit enzyme composed of 14 subunits. The complex is composed of a catalytic core of 3 subunits MT-CO1, MT-CO2 and MT-CO3, encoded in the mitochondrial DNA, and 11 supernumerary subunits COX4I, COX5A, COX5B, COX6A, COX6B, COX6C, COX7A, COX7B, COX7C, COX8 and NDUFA4, which are encoded in the nuclear genome. The complex exists as a monomer or a dimer and forms supercomplexes (SCs) in the inner mitochondrial membrane with NADH-ubiquinone oxidoreductase (complex I, CI) and ubiquinol-cytochrome c oxidoreductase (cytochrome b-c1 complex, complex III, CIII), resulting in different assemblies (supercomplex SCI(1)III(2)IV(1) and megacomplex MCI(2)III(2)IV(2)). Found in a complex with TMEM177, COA6, COX18, COX20, SCO1 and SCO2. Interacts with TMEM177 in a COX20-dependent manner. Interacts with COX20. Interacts with COX16. It depends on Cu cation as a cofactor.

The protein resides in the mitochondrion inner membrane. The enzyme catalyses 4 Fe(II)-[cytochrome c] + O2 + 8 H(+)(in) = 4 Fe(III)-[cytochrome c] + 2 H2O + 4 H(+)(out). Functionally, component of the cytochrome c oxidase, the last enzyme in the mitochondrial electron transport chain which drives oxidative phosphorylation. The respiratory chain contains 3 multisubunit complexes succinate dehydrogenase (complex II, CII), ubiquinol-cytochrome c oxidoreductase (cytochrome b-c1 complex, complex III, CIII) and cytochrome c oxidase (complex IV, CIV), that cooperate to transfer electrons derived from NADH and succinate to molecular oxygen, creating an electrochemical gradient over the inner membrane that drives transmembrane transport and the ATP synthase. Cytochrome c oxidase is the component of the respiratory chain that catalyzes the reduction of oxygen to water. Electrons originating from reduced cytochrome c in the intermembrane space (IMS) are transferred via the dinuclear copper A center (CU(A)) of subunit 2 and heme A of subunit 1 to the active site in subunit 1, a binuclear center (BNC) formed by heme A3 and copper B (CU(B)). The BNC reduces molecular oxygen to 2 water molecules using 4 electrons from cytochrome c in the IMS and 4 protons from the mitochondrial matrix. The protein is Cytochrome c oxidase subunit 2 (MT-CO2) of Chrysocyon brachyurus (Maned wolf).